The sequence spans 502 residues: Maturase K (502 aa).

The protein belongs to the intron maturase 2 family. MatK subfamily.

The protein localises to the plastid. Its subcellular location is the chloroplast. Functionally, usually encoded in the trnK tRNA gene intron. Probably assists in splicing its own and other chloroplast group II introns. This Ehretia anacua (Sandpaper tree) protein is Maturase K.